The primary structure comprises 574 residues: 5'-nucleotidase (574 aa).

An N-terminal signal peptide occupies residues 1–26 (MNPGAARTPALRILALGALLWPAARP). 2 residues coordinate Zn(2+): aspartate 36 and histidine 38. A disulfide bridge connects residues cysteine 51 and cysteine 57. N-linked (GlcNAc...) asparagine glycosylation occurs at asparagine 53. Zn(2+) is bound by residues aspartate 85, asparagine 117, histidine 220, and histidine 243. N-linked (GlcNAc...) asparagine glycans are attached at residues asparagine 311 and asparagine 333. Intrachain disulfides connect cysteine 353–cysteine 358 and cysteine 365–cysteine 387. Arginine 354 provides a ligand contact to AMP. Arginine 354 lines the IMP pocket. Asparagine 390 and arginine 395 together coordinate AMP. IMP contacts are provided by asparagine 390 and arginine 395. Residue asparagine 403 is glycosylated (N-linked (GlcNAc...) asparagine). Position 417 (phenylalanine 417) interacts with AMP. Residue phenylalanine 417 participates in IMP binding. An intrachain disulfide couples cysteine 476 to cysteine 479. 2 residues coordinate AMP: phenylalanine 500 and aspartate 506. IMP-binding residues include phenylalanine 500 and aspartate 506. Serine 549 is lipidated: GPI-anchor amidated serine. A propeptide spans 550-574 (AGSHCCGSFSLIFLSVLAVIIILYQ) (removed in mature form).

It belongs to the 5'-nucleotidase family. In terms of assembly, homodimer. It depends on Zn(2+) as a cofactor.

Its subcellular location is the cell membrane. It carries out the reaction a ribonucleoside 5'-phosphate + H2O = a ribonucleoside + phosphate. It catalyses the reaction a 2'-deoxyribonucleoside 5'-phosphate + H2O = a 2'-deoxyribonucleoside + phosphate. The enzyme catalyses dTMP + H2O = thymidine + phosphate. The catalysed reaction is CMP + H2O = cytidine + phosphate. It carries out the reaction IMP + H2O = inosine + phosphate. It catalyses the reaction AMP + H2O = adenosine + phosphate. The enzyme catalyses GMP + H2O = guanosine + phosphate. The catalysed reaction is UMP + H2O = uridine + phosphate. It carries out the reaction dAMP + H2O = 2'-deoxyadenosine + phosphate. It catalyses the reaction dCMP + H2O = 2'-deoxycytidine + phosphate. Catalyzes the hydrolysis of nucleotide monophosphates, releasing inorganic phosphate and the corresponding nucleoside, with AMP being the preferred substrate. Shows a preference for ribonucleotide monophosphates over their equivalent deoxyribose forms. Other substrates include IMP, UMP, GMP, CMP, dAMP, dCMP, dTMP, NAD and NMN. This Bos taurus (Bovine) protein is 5'-nucleotidase (NT5E).